Reading from the N-terminus, the 147-residue chain is Phosphoribosyl-AMP cyclohydrolase (147 aa).

D91 contributes to the Mg(2+) binding site. Position 92 (C92) interacts with Zn(2+). Mg(2+) contacts are provided by D93 and D95. Positions 109 and 116 each coordinate Zn(2+).

The protein belongs to the PRA-CH family. Homodimer. Mg(2+) is required as a cofactor. Requires Zn(2+) as cofactor.

Its subcellular location is the cytoplasm. The catalysed reaction is 1-(5-phospho-beta-D-ribosyl)-5'-AMP + H2O = 1-(5-phospho-beta-D-ribosyl)-5-[(5-phospho-beta-D-ribosylamino)methylideneamino]imidazole-4-carboxamide. It functions in the pathway amino-acid biosynthesis; L-histidine biosynthesis; L-histidine from 5-phospho-alpha-D-ribose 1-diphosphate: step 3/9. Its function is as follows. Catalyzes the hydrolysis of the adenine ring of phosphoribosyl-AMP. The protein is Phosphoribosyl-AMP cyclohydrolase of Rhodopseudomonas palustris (strain BisA53).